We begin with the raw amino-acid sequence, 231 residues long: 7-cyano-7-deazaguanine synthase (231 aa).

8-18 (FSGGQDSTTCL) lines the ATP pocket. Residues cysteine 188, cysteine 197, cysteine 200, and cysteine 203 each coordinate Zn(2+).

This sequence belongs to the QueC family. Zn(2+) is required as a cofactor.

It carries out the reaction 7-carboxy-7-deazaguanine + NH4(+) + ATP = 7-cyano-7-deazaguanine + ADP + phosphate + H2O + H(+). Its pathway is purine metabolism; 7-cyano-7-deazaguanine biosynthesis. In terms of biological role, catalyzes the ATP-dependent conversion of 7-carboxy-7-deazaguanine (CDG) to 7-cyano-7-deazaguanine (preQ(0)). In Cronobacter sakazakii (strain ATCC BAA-894) (Enterobacter sakazakii), this protein is 7-cyano-7-deazaguanine synthase.